A 40-amino-acid polypeptide reads, in one-letter code: Photosystem II reaction center protein J (40 aa).

The helical transmembrane segment at 8–28 (IPLWIIGTVTGIFGIGLIGIF) threads the bilayer.

Belongs to the PsbJ family. In terms of assembly, PSII is composed of 1 copy each of membrane proteins PsbA, PsbB, PsbC, PsbD, PsbE, PsbF, PsbH, PsbI, PsbJ, PsbK, PsbL, PsbM, PsbT, PsbX, PsbY, PsbZ, Psb30/Ycf12, at least 3 peripheral proteins of the oxygen-evolving complex and a large number of cofactors. It forms dimeric complexes.

The protein resides in the plastid membrane. Functionally, one of the components of the core complex of photosystem II (PSII). PSII is a light-driven water:plastoquinone oxidoreductase that uses light energy to abstract electrons from H(2)O, generating O(2) and a proton gradient subsequently used for ATP formation. It consists of a core antenna complex that captures photons, and an electron transfer chain that converts photonic excitation into a charge separation. The polypeptide is Photosystem II reaction center protein J (Cuscuta reflexa (Southern Asian dodder)).